The primary structure comprises 133 residues: Holo-[acyl-carrier-protein] synthase (133 aa).

Residues D8 and E58 each coordinate Mg(2+).

The protein belongs to the P-Pant transferase superfamily. AcpS family. Requires Mg(2+) as cofactor.

The protein localises to the cytoplasm. It carries out the reaction apo-[ACP] + CoA = holo-[ACP] + adenosine 3',5'-bisphosphate + H(+). Its function is as follows. Transfers the 4'-phosphopantetheine moiety from coenzyme A to a Ser of acyl-carrier-protein. The chain is Holo-[acyl-carrier-protein] synthase from Erythrobacter litoralis (strain HTCC2594).